A 580-amino-acid chain; its full sequence is Proline--tRNA ligase (580 aa).

This sequence belongs to the class-II aminoacyl-tRNA synthetase family. ProS type 1 subfamily. In terms of assembly, homodimer.

It is found in the cytoplasm. It carries out the reaction tRNA(Pro) + L-proline + ATP = L-prolyl-tRNA(Pro) + AMP + diphosphate. In terms of biological role, catalyzes the attachment of proline to tRNA(Pro) in a two-step reaction: proline is first activated by ATP to form Pro-AMP and then transferred to the acceptor end of tRNA(Pro). As ProRS can inadvertently accommodate and process non-cognate amino acids such as alanine and cysteine, to avoid such errors it has two additional distinct editing activities against alanine. One activity is designated as 'pretransfer' editing and involves the tRNA(Pro)-independent hydrolysis of activated Ala-AMP. The other activity is designated 'posttransfer' editing and involves deacylation of mischarged Ala-tRNA(Pro). The misacylated Cys-tRNA(Pro) is not edited by ProRS. The chain is Proline--tRNA ligase from Mycobacteroides abscessus (strain ATCC 19977 / DSM 44196 / CCUG 20993 / CIP 104536 / JCM 13569 / NCTC 13031 / TMC 1543 / L948) (Mycobacterium abscessus).